The following is a 194-amino-acid chain: Imidazoleglycerol-phosphate dehydratase (194 aa).

Belongs to the imidazoleglycerol-phosphate dehydratase family.

The protein localises to the cytoplasm. It catalyses the reaction D-erythro-1-(imidazol-4-yl)glycerol 3-phosphate = 3-(imidazol-4-yl)-2-oxopropyl phosphate + H2O. The protein operates within amino-acid biosynthesis; L-histidine biosynthesis; L-histidine from 5-phospho-alpha-D-ribose 1-diphosphate: step 6/9. The protein is Imidazoleglycerol-phosphate dehydratase of Bacillus cereus (strain ATCC 14579 / DSM 31 / CCUG 7414 / JCM 2152 / NBRC 15305 / NCIMB 9373 / NCTC 2599 / NRRL B-3711).